A 473-amino-acid polypeptide reads, in one-letter code: Probable glucose-6-phosphate 1-dehydrogenase C7.13c (473 aa).

Residues R43, Y121, and K144 each contribute to the NADP(+) site. D-glucose 6-phosphate-binding positions include K144, 174-178, E213, and D232; that span reads HYTAK. H237 functions as the Proton acceptor in the catalytic mechanism. K331 is a binding site for D-glucose 6-phosphate. K341 is a binding site for NADP(+). Q366 lines the D-glucose 6-phosphate pocket.

Belongs to the glucose-6-phosphate dehydrogenase family.

Its subcellular location is the cytoplasm. The enzyme catalyses D-glucose 6-phosphate + NADP(+) = 6-phospho-D-glucono-1,5-lactone + NADPH + H(+). It participates in carbohydrate degradation; pentose phosphate pathway; D-ribulose 5-phosphate from D-glucose 6-phosphate (oxidative stage): step 1/3. Functionally, catalyzes the rate-limiting step of the oxidative pentose-phosphate pathway, which represents a route for the dissimilation of carbohydrates besides glycolysis. The main function of this enzyme is to provide reducing power (NADPH) and pentose phosphates for fatty acid and nucleic acid synthesis. This is Probable glucose-6-phosphate 1-dehydrogenase C7.13c from Schizosaccharomyces pombe (strain 972 / ATCC 24843) (Fission yeast).